The primary structure comprises 178 residues: Large ribosomal subunit protein uL6 (178 aa).

Belongs to the universal ribosomal protein uL6 family. In terms of assembly, part of the 50S ribosomal subunit.

Its function is as follows. This protein binds to the 23S rRNA, and is important in its secondary structure. It is located near the subunit interface in the base of the L7/L12 stalk, and near the tRNA binding site of the peptidyltransferase center. The chain is Large ribosomal subunit protein uL6 from Streptococcus equi subsp. zooepidemicus (strain H70).